A 449-amino-acid polypeptide reads, in one-letter code: Glutamyl-tRNA reductase (449 aa).

Residues 58–61 (TCNR), S121, 126–128 (ETQ), and Q132 each bind substrate. The Nucleophile role is filled by C59. 203–208 (GLGEMA) lines the NADP(+) pocket.

It belongs to the glutamyl-tRNA reductase family. In terms of assembly, homodimer.

It catalyses the reaction (S)-4-amino-5-oxopentanoate + tRNA(Glu) + NADP(+) = L-glutamyl-tRNA(Glu) + NADPH + H(+). It participates in porphyrin-containing compound metabolism; protoporphyrin-IX biosynthesis; 5-aminolevulinate from L-glutamyl-tRNA(Glu): step 1/2. Its function is as follows. Catalyzes the NADPH-dependent reduction of glutamyl-tRNA(Glu) to glutamate 1-semialdehyde (GSA). This Helicobacter pylori (strain P12) protein is Glutamyl-tRNA reductase.